The chain runs to 86 residues: Acyl carrier protein (86 aa).

A Carrier domain is found at Glu-5–Ile-80. An O-(pantetheine 4'-phosphoryl)serine modification is found at Ser-40.

Belongs to the acyl carrier protein (ACP) family. In terms of processing, 4'-phosphopantetheine is transferred from CoA to a specific serine of apo-ACP by AcpS. This modification is essential for activity because fatty acids are bound in thioester linkage to the sulfhydryl of the prosthetic group.

The protein localises to the plastid. It is found in the chloroplast. It functions in the pathway lipid metabolism; fatty acid biosynthesis. Functionally, carrier of the growing fatty acid chain in fatty acid biosynthesis. The sequence is that of Acyl carrier protein from Cyanidium caldarium (Red alga).